Consider the following 274-residue polypeptide: Large ribosomal subunit protein uL2 (274 aa).

2 disordered regions span residues 21–59 (KVGL…GGHK) and 223–274 (VAMN…QLKG). The segment covering 32-42 (SLTSGKKSSGG) has biased composition (low complexity). Over residues 45–59 (NHGRITTRHRGGGHK) the composition is skewed to basic residues. Positions 263–274 (KSSDKYIKQLKG) are enriched in basic and acidic residues.

It belongs to the universal ribosomal protein uL2 family. As to quaternary structure, part of the 50S ribosomal subunit. Forms a bridge to the 30S subunit in the 70S ribosome.

Functionally, one of the primary rRNA binding proteins. Required for association of the 30S and 50S subunits to form the 70S ribosome, for tRNA binding and peptide bond formation. It has been suggested to have peptidyltransferase activity; this is somewhat controversial. Makes several contacts with the 16S rRNA in the 70S ribosome. This is Large ribosomal subunit protein uL2 from Wolbachia sp. subsp. Drosophila simulans (strain wRi).